We begin with the raw amino-acid sequence, 270 residues long: Non-structural maintenance of chromosomes element 1 homolog (270 aa).

The segment at 185–226 (CNVCHKIAIQCQLCENCGIPLHLQCAGIYFRGIANPLCPNCK) adopts an RING-type; atypical zinc-finger fold. The interval 236 to 270 (LSQVSSQGPSHSQAAPVRGRNQRSRNISTVARTSR) is disordered. Composition is skewed to polar residues over residues 237 to 248 (SQVSSQGPSHSQ) and 259 to 270 (SRNISTVARTSR).

This sequence belongs to the NSE1 family. In terms of assembly, component of the SMC5-SMC6 complex.

It is found in the nucleus. The protein localises to the chromosome. Its subcellular location is the telomere. The enzyme catalyses S-ubiquitinyl-[E2 ubiquitin-conjugating enzyme]-L-cysteine + [acceptor protein]-L-lysine = [E2 ubiquitin-conjugating enzyme]-L-cysteine + N(6)-ubiquitinyl-[acceptor protein]-L-lysine.. In terms of biological role, RING-type zinc finger-containing E3 ubiquitin ligase that assembles with melanoma antigen protein (MAGE) to catalyze the direct transfer of ubiquitin from E2 ubiquitin-conjugating enzyme to a specific substrate. Within MAGE-RING ubiquitin ligase complex, MAGE stimulates and specifies ubiquitin ligase activity likely through recruitment and/or stabilization of the E2 ubiquitin-conjugating enzyme at the E3:substrate complex. Involved in maintenance of genome integrity, DNA damage response and DNA repair. The sequence is that of Non-structural maintenance of chromosomes element 1 homolog (nsmce1) from Xenopus tropicalis (Western clawed frog).